A 149-amino-acid polypeptide reads, in one-letter code: Hut operon positive regulatory protein (149 aa).

It belongs to the HutP family. Homohexamer.

Antiterminator that binds to cis-acting regulatory sequences on the mRNA in the presence of histidine, thereby suppressing transcription termination and activating the hut operon for histidine utilization. The sequence is that of Hut operon positive regulatory protein from Geobacillus thermodenitrificans (strain NG80-2).